The following is a 193-amino-acid chain: Probable oligoribonuclease (193 aa).

Residues 15-177 (IIWIDCEMTG…DDIMESIAEL (163 aa)) enclose the Exonuclease domain. The active site involves Tyr136.

Belongs to the oligoribonuclease family.

In terms of biological role, 3'-to-5' exoribonuclease specific for small oligoribonucleotides. This chain is Probable oligoribonuclease, found in Caenorhabditis elegans.